Consider the following 538-residue polypeptide: Nicotinate phosphoribosyltransferase (538 aa).

The nicotinate site is built by tyrosine 21 and threonine 210. Residue histidine 213 is modified to Phosphohistidine. Arginine 318 provides a ligand contact to nicotinate. Threonine 380 contributes to the 5-phospho-alpha-D-ribose 1-diphosphate binding site.

It belongs to the NAPRTase family. Homodimer. Mg(2+) is required as a cofactor. Mn(2+) serves as cofactor. In terms of processing, transiently phosphorylated on a His residue during the reaction cycle. Phosphorylation strongly increases the affinity for substrates and increases the rate of nicotinate D-ribonucleotide production. Dephosphorylation regenerates the low-affinity form of the enzyme, leading to product release.

The protein resides in the cytoplasm. It localises to the cytosol. It catalyses the reaction nicotinate + 5-phospho-alpha-D-ribose 1-diphosphate + ATP + H2O = nicotinate beta-D-ribonucleotide + ADP + phosphate + diphosphate. Its pathway is cofactor biosynthesis; NAD(+) biosynthesis; nicotinate D-ribonucleotide from nicotinate: step 1/1. Functionally, catalyzes the first step in the biosynthesis of NAD from nicotinic acid, the ATP-dependent synthesis of beta-nicotinate D-ribonucleotide from nicotinate and 5-phospho-D-ribose 1-phosphate. Helps prevent cellular oxidative stress via its role in NAD biosynthesis. This Rattus norvegicus (Rat) protein is Nicotinate phosphoribosyltransferase (Naprt).